The sequence spans 557 residues: Dihydroxy-acid dehydratase (557 aa).

Cys50 lines the [2Fe-2S] cluster pocket. Residue Asp82 coordinates Mg(2+). Cys123 provides a ligand contact to [2Fe-2S] cluster. 2 residues coordinate Mg(2+): Asp124 and Lys125. Lys125 carries the N6-carboxylysine modification. Cys195 is a binding site for [2Fe-2S] cluster. Glu447 lines the Mg(2+) pocket. The active-site Proton acceptor is Ser473.

Belongs to the IlvD/Edd family. As to quaternary structure, homodimer. It depends on [2Fe-2S] cluster as a cofactor. Mg(2+) is required as a cofactor.

The enzyme catalyses (2R)-2,3-dihydroxy-3-methylbutanoate = 3-methyl-2-oxobutanoate + H2O. The catalysed reaction is (2R,3R)-2,3-dihydroxy-3-methylpentanoate = (S)-3-methyl-2-oxopentanoate + H2O. It functions in the pathway amino-acid biosynthesis; L-isoleucine biosynthesis; L-isoleucine from 2-oxobutanoate: step 3/4. The protein operates within amino-acid biosynthesis; L-valine biosynthesis; L-valine from pyruvate: step 3/4. Functions in the biosynthesis of branched-chain amino acids. Catalyzes the dehydration of (2R,3R)-2,3-dihydroxy-3-methylpentanoate (2,3-dihydroxy-3-methylvalerate) into 2-oxo-3-methylpentanoate (2-oxo-3-methylvalerate) and of (2R)-2,3-dihydroxy-3-methylbutanoate (2,3-dihydroxyisovalerate) into 2-oxo-3-methylbutanoate (2-oxoisovalerate), the penultimate precursor to L-isoleucine and L-valine, respectively. In Janthinobacterium sp. (strain Marseille) (Minibacterium massiliensis), this protein is Dihydroxy-acid dehydratase.